The chain runs to 580 residues: Keratin, type II cytoskeletal 5 (580 aa).

A head region spans residues 1 to 161; the sequence is MSRQSSVSFR…DPTIQRVRTE (161 aa). 4 positions are modified to phosphoserine: serine 5, serine 8, serine 16, and serine 21. Threonine 24 is subject to Phosphothreonine; by CDK1. Serine 26, serine 36, serine 47, serine 61, serine 68, serine 72, serine 75, and serine 79 each carry phosphoserine. At threonine 145 the chain carries Phosphothreonine; by CDK1. Threonine 160 carries the post-translational modification Phosphothreonine; by AURKB. The interval 162-197 is coil 1A; the sequence is EREQIKTLNNKFASFIDKVRFLEQQNKVLDTKWALL. One can recognise an IF rod domain in the interval 162–475; that stretch reads EREQIKTLNN…KLLEGEECRL (314 aa). A linker 1 region spans residues 198–216; sequence QEQGTKTIKQNLDPLFEQY. Residues 217-309 form a coil 1B region; sequence INNLRRQLDG…FFDAELSQMQ (93 aa). The segment at 310 to 332 is linker 12; sequence THVSDTSVVLSMDNNRSLDLDSI. The tract at residues 333–471 is coil 2; the sequence is IAEVKAQYED…ATYRKLLEGE (139 aa). The tail stretch occupies residues 472 to 580; it reads ECRLSGEGVG…TSSSRRSFKS (109 aa). Omega-N-methylarginine is present on arginine 526. Residues 555-580 are disordered; it reads FGSGGGSGSSVKFVSTTSSSRRSFKS. A compositionally biased stretch (low complexity) spans 563 to 580; that stretch reads SSVKFVSTTSSSRRSFKS.

The protein belongs to the intermediate filament family. As to quaternary structure, heterodimer of a type I and a type II keratin. Heterodimer with type I keratin KRT25 leading to the formation of keratin intermediate filament (KIF) network. Forms a heterodimer (via 2B domains) with KRT14 (via 2B domains). Interacts with PLEC isoform 1C, when in a heterodimer with KRT14. Interacts with TCHP. Interacts with EPPK1. Interacts with AMELX. Interacts with PKP1 (via N-terminus) and PKP2. Phosphorylated by CDK1, AURKB and Rho-kinase, phosphorylation is regulated by the cell cycle. Thr-24 phosphorylation, mediated by CDK1, peaks during prometaphase or metaphase cells with phosphorylated filamentous structures evident throughout the cytoplasm during early mitosis. CDK1 phosphorylates Thr-24 in mitotic cells at the site of injury. Post-translationally, O-glycosylated. Expressed in the corneal epithelium (at protein level). Expressed in the epidermis of the ear (at protein level). Expressed in the basal and spinous layers of the skin at birth (at protein level).

It is found in the cytoplasm. Its function is as follows. Required for the formation of keratin intermediate filaments in the basal epidermis and maintenance of the skin barrier in response to mechanical stress. Regulates the recruitment of Langerhans cells to the epidermis, potentially by modulation of the abundance of macrophage chemotactic cytokines, macrophage inflammatory cytokines and CTNND1 localization in keratinocytes. The sequence is that of Keratin, type II cytoskeletal 5 from Mus musculus (Mouse).